The chain runs to 335 residues: Glyceraldehyde-3-phosphate dehydrogenase (335 aa).

NAD(+)-binding positions include 13-14 (RI), D34, M79, and S121. D-glyceraldehyde 3-phosphate contacts are provided by residues 151–153 (SCT), T182, 211–212 (TG), and R234. C152 serves as the catalytic Nucleophile. An S-nitrosocysteine modification is found at C152. An NAD(+)-binding site is contributed by N316.

This sequence belongs to the glyceraldehyde-3-phosphate dehydrogenase family. In terms of assembly, homotetramer. Post-translationally, S-nitrosylation of Cys-152 leads to translocation to the nucleus.

It is found in the cytoplasm. The protein localises to the cytosol. The protein resides in the cytoskeleton. It localises to the nucleus. The enzyme catalyses D-glyceraldehyde 3-phosphate + phosphate + NAD(+) = (2R)-3-phospho-glyceroyl phosphate + NADH + H(+). The catalysed reaction is S-nitroso-L-cysteinyl-[GAPDH] + L-cysteinyl-[protein] = L-cysteinyl-[GAPDH] + S-nitroso-L-cysteinyl-[protein]. The protein operates within carbohydrate degradation; glycolysis; pyruvate from D-glyceraldehyde 3-phosphate: step 1/5. Its function is as follows. Has both glyceraldehyde-3-phosphate dehydrogenase and nitrosylase activities, thereby playing a role in glycolysis and nuclear functions, respectively. Glyceraldehyde-3-phosphate dehydrogenase is a key enzyme in glycolysis that catalyzes the first step of the pathway by converting D-glyceraldehyde 3-phosphate (G3P) into 3-phospho-D-glyceroyl phosphate. Participates in nuclear events including transcription, RNA transport, DNA replication and apoptosis. Nuclear functions are probably due to the nitrosylase activity that mediates cysteine S-nitrosylation of nuclear target proteins such as SIRT1, HDAC2 and PRKDC. This Oncorhynchus mykiss (Rainbow trout) protein is Glyceraldehyde-3-phosphate dehydrogenase (gapdh).